A 94-amino-acid polypeptide reads, in one-letter code: Putative pterin-4-alpha-carbinolamine dehydratase (94 aa).

This sequence belongs to the pterin-4-alpha-carbinolamine dehydratase family.

It carries out the reaction (4aS,6R)-4a-hydroxy-L-erythro-5,6,7,8-tetrahydrobiopterin = (6R)-L-erythro-6,7-dihydrobiopterin + H2O. The polypeptide is Putative pterin-4-alpha-carbinolamine dehydratase (Mycobacterium tuberculosis (strain ATCC 25177 / H37Ra)).